The sequence spans 232 residues: 2-C-methyl-D-erythritol 4-phosphate cytidylyltransferase (232 aa).

Belongs to the IspD/TarI cytidylyltransferase family. IspD subfamily.

It carries out the reaction 2-C-methyl-D-erythritol 4-phosphate + CTP + H(+) = 4-CDP-2-C-methyl-D-erythritol + diphosphate. The protein operates within isoprenoid biosynthesis; isopentenyl diphosphate biosynthesis via DXP pathway; isopentenyl diphosphate from 1-deoxy-D-xylulose 5-phosphate: step 2/6. In terms of biological role, catalyzes the formation of 4-diphosphocytidyl-2-C-methyl-D-erythritol from CTP and 2-C-methyl-D-erythritol 4-phosphate (MEP). This chain is 2-C-methyl-D-erythritol 4-phosphate cytidylyltransferase, found in Geobacter metallireducens (strain ATCC 53774 / DSM 7210 / GS-15).